The chain runs to 224 residues: tRNA (guanine-N(7)-)-methyltransferase (224 aa).

S-adenosyl-L-methionine contacts are provided by Glu-54, Glu-79, Glu-106, and Asp-129. Asp-129 is a catalytic residue. Substrate contacts are provided by Lys-133 and Asp-165.

The protein belongs to the class I-like SAM-binding methyltransferase superfamily. TrmB family.

The enzyme catalyses guanosine(46) in tRNA + S-adenosyl-L-methionine = N(7)-methylguanosine(46) in tRNA + S-adenosyl-L-homocysteine. It functions in the pathway tRNA modification; N(7)-methylguanine-tRNA biosynthesis. Its function is as follows. Catalyzes the formation of N(7)-methylguanine at position 46 (m7G46) in tRNA. This Chlamydia caviae (strain ATCC VR-813 / DSM 19441 / 03DC25 / GPIC) (Chlamydophila caviae) protein is tRNA (guanine-N(7)-)-methyltransferase.